The following is a 343-amino-acid chain: Phenylalanine--tRNA ligase alpha subunit (343 aa).

Mg(2+) is bound at residue E268.

Belongs to the class-II aminoacyl-tRNA synthetase family. Phe-tRNA synthetase alpha subunit type 1 subfamily. Tetramer of two alpha and two beta subunits. Mg(2+) serves as cofactor.

The protein resides in the cytoplasm. It carries out the reaction tRNA(Phe) + L-phenylalanine + ATP = L-phenylalanyl-tRNA(Phe) + AMP + diphosphate + H(+). This is Phenylalanine--tRNA ligase alpha subunit from Cupriavidus necator (strain ATCC 17699 / DSM 428 / KCTC 22496 / NCIMB 10442 / H16 / Stanier 337) (Ralstonia eutropha).